Here is a 121-residue protein sequence, read N- to C-terminus: MAKSSFKQEHDLEKRRAEAARIREKYPDRIPVIVEKAEKSDIPTIDKKKYLVPADLTVGQFVYVIRKRIKLSAEKAIFIFVDNVLPPAGALMSSVYEEKKDDDGFLYVTYSGENTFGFGSP.

Glycine 117 is lipidated: Phosphatidylethanolamine amidated glycine. The propeptide at 118–121 (FGSP) is removed in mature form.

It belongs to the ATG8 family. Interacts with ATG4. Interacts with NBR1. Interacts with ATI1 and ATI2. Interacts with SH3P2. In terms of processing, the C-terminal 4 residues are removed by ATG4 to expose Gly-117 at the C-terminus. This Gly-117 forms then a thioester bond with the 'Cys-558' of ATG7 (E1-like activating enzyme) before being transferred to the 'Cys-258' of ATG3 (the specific E2 conjugating enzyme), in order to be finally amidated with phosphatidylethanolamine. This lipid modification anchors ATG8 to autophagosomes. Constitutively expressed.

It localises to the cytoplasmic vesicle. The protein localises to the autophagosome membrane. It is found in the vacuole membrane. Its subcellular location is the cytoplasm. The protein resides in the cytoskeleton. Functionally, ubiquitin-like modifier involved in autophagosomes formation. May mediate the delivery of the autophagosomes to the vacuole via the microtubule cytoskeleton. The polypeptide is Autophagy-related protein 8f (ATG8F) (Arabidopsis thaliana (Mouse-ear cress)).